Reading from the N-terminus, the 66-residue chain is Large ribosomal subunit protein bL33c (66 aa).

Belongs to the bacterial ribosomal protein bL33 family.

The protein localises to the plastid. The protein resides in the chloroplast. This is Large ribosomal subunit protein bL33c from Drimys granadensis.